The following is a 538-amino-acid chain: Chaperonin GroEL (538 aa).

ATP is bound by residues 29 to 32, 86 to 90, Gly-413, 477 to 479, and Asp-493; these read TLGP, DGTTT, and NAA.

It belongs to the chaperonin (HSP60) family. In terms of assembly, forms a cylinder of 14 subunits composed of two heptameric rings stacked back-to-back. Interacts with the co-chaperonin GroES.

The protein localises to the cytoplasm. The catalysed reaction is ATP + H2O + a folded polypeptide = ADP + phosphate + an unfolded polypeptide.. Its function is as follows. Together with its co-chaperonin GroES, plays an essential role in assisting protein folding. The GroEL-GroES system forms a nano-cage that allows encapsulation of the non-native substrate proteins and provides a physical environment optimized to promote and accelerate protein folding. In Bifidobacterium adolescentis (strain ATCC 15703 / DSM 20083 / NCTC 11814 / E194a), this protein is Chaperonin GroEL.